A 643-amino-acid polypeptide reads, in one-letter code: Probable potassium transport system protein Kup 2 (643 aa).

The disordered stretch occupies residues 1–20 (MSSHVPSFLRGTPDMTAHGG). 12 helical membrane passes run 27 to 47 (VAGLMLAAIGVVFGDIGTSPL), 70 to 90 (VLSLVFWAITIIVSFKYVIII), 120 to 140 (LMVSALGIFAAALFYGDSIIT), 157 to 177 (PHLEQWVVPLTIVILFVLFAI), 185 to 205 (VGKMFGPVMLVWFLTLAILGI), 231 to 251 (GWHAFLALGSVVLAVTGAEAL), 267 to 287 (WYLLVLPALILNYFGQGALLI), 300 to 320 (LAPASLALPLVILATLATVIA), 357 to 377 (IYLPFVNWLLMCMVMVLVVGF), 389 to 409 (VAVTGTMVIDALLVGTVMLLI), 419 to 439 (WLIGGFLVVDLAFFLANSIKI), and 440 to 460 (PDGGWFPLVVGGLLFTILTTW).

It belongs to the HAK/KUP transporter (TC 2.A.72) family.

It is found in the cell inner membrane. It carries out the reaction K(+)(in) + H(+)(in) = K(+)(out) + H(+)(out). In terms of biological role, transport of potassium into the cell. Likely operates as a K(+):H(+) symporter. This is Probable potassium transport system protein Kup 2 from Paramagnetospirillum magneticum (strain ATCC 700264 / AMB-1) (Magnetospirillum magneticum).